The primary structure comprises 248 residues: tRNA (guanine-N(1)-)-methyltransferase (248 aa).

S-adenosyl-L-methionine-binding positions include Gly-116 and 135–140 (IGDFVL).

The protein belongs to the RNA methyltransferase TrmD family. In terms of assembly, homodimer.

It is found in the cytoplasm. The catalysed reaction is guanosine(37) in tRNA + S-adenosyl-L-methionine = N(1)-methylguanosine(37) in tRNA + S-adenosyl-L-homocysteine + H(+). Specifically methylates guanosine-37 in various tRNAs. The protein is tRNA (guanine-N(1)-)-methyltransferase of Anaeromyxobacter sp. (strain Fw109-5).